We begin with the raw amino-acid sequence, 272 residues long: ATP phosphoribosyltransferase regulatory subunit (272 aa).

The protein belongs to the class-II aminoacyl-tRNA synthetase family. HisZ subfamily. As to quaternary structure, heteromultimer composed of HisG and HisZ subunits.

It localises to the cytoplasm. Its pathway is amino-acid biosynthesis; L-histidine biosynthesis; L-histidine from 5-phospho-alpha-D-ribose 1-diphosphate: step 1/9. Required for the first step of histidine biosynthesis. May allow the feedback regulation of ATP phosphoribosyltransferase activity by histidine. The polypeptide is ATP phosphoribosyltransferase regulatory subunit (Staphylococcus aureus (strain USA300)).